We begin with the raw amino-acid sequence, 269 residues long: Formamidopyrimidine-DNA glycosylase (269 aa).

The Schiff-base intermediate with DNA role is filled by proline 2. Glutamate 3 acts as the Proton donor in catalysis. Lysine 57 (proton donor; for beta-elimination activity) is an active-site residue. 3 residues coordinate DNA: histidine 90, arginine 109, and lysine 150. Residues 235–269 form an FPG-type zinc finger; that stretch reads QVYGKGGLPCPKCGTELAEVKIGQRATVYCSQCQQ. Catalysis depends on arginine 259, which acts as the Proton donor; for delta-elimination activity.

This sequence belongs to the FPG family. As to quaternary structure, monomer. Requires Zn(2+) as cofactor.

It catalyses the reaction Hydrolysis of DNA containing ring-opened 7-methylguanine residues, releasing 2,6-diamino-4-hydroxy-5-(N-methyl)formamidopyrimidine.. It carries out the reaction 2'-deoxyribonucleotide-(2'-deoxyribose 5'-phosphate)-2'-deoxyribonucleotide-DNA = a 3'-end 2'-deoxyribonucleotide-(2,3-dehydro-2,3-deoxyribose 5'-phosphate)-DNA + a 5'-end 5'-phospho-2'-deoxyribonucleoside-DNA + H(+). Involved in base excision repair of DNA damaged by oxidation or by mutagenic agents. Acts as a DNA glycosylase that recognizes and removes damaged bases. Has a preference for oxidized purines, such as 7,8-dihydro-8-oxoguanine (8-oxoG). Has AP (apurinic/apyrimidinic) lyase activity and introduces nicks in the DNA strand. Cleaves the DNA backbone by beta-delta elimination to generate a single-strand break at the site of the removed base with both 3'- and 5'-phosphates. This Photobacterium damsela subsp. piscicida (Pasteurella piscicida) protein is Formamidopyrimidine-DNA glycosylase.